A 493-amino-acid polypeptide reads, in one-letter code: Alpha-amylase-related protein (493 aa).

Residues Met1 to Ala19 form the signal peptide. Pyrrolidone carboxylic acid is present on Gln20. Cys47 and Cys103 form a disulfide bridge. Positions 117, 168, and 177 each coordinate Ca(2+). Cys156 and Cys170 are oxidised to a cystine. Residue Arg205 participates in chloride binding. Asp207 (nucleophile) is an active-site residue. His211 provides a ligand contact to Ca(2+). Glu244 functions as the Proton donor in the catalytic mechanism. Chloride contacts are provided by Asn307 and Arg342. Cystine bridges form between Cys375/Cys381, Cys417/Cys440, and Cys447/Cys459.

Belongs to the glycosyl hydrolase 13 family. In terms of assembly, monomer. The cofactor is Ca(2+). It depends on chloride as a cofactor.

It is found in the secreted. The catalysed reaction is Endohydrolysis of (1-&gt;4)-alpha-D-glucosidic linkages in polysaccharides containing three or more (1-&gt;4)-alpha-linked D-glucose units.. The protein is Alpha-amylase-related protein (Amyrel) of Drosophila ananassae (Fruit fly).